The primary structure comprises 84 residues: Small ribosomal subunit protein bS20 (84 aa).

Belongs to the bacterial ribosomal protein bS20 family.

In terms of biological role, binds directly to 16S ribosomal RNA. This is Small ribosomal subunit protein bS20 from Porphyromonas gingivalis (strain ATCC 33277 / DSM 20709 / CIP 103683 / JCM 12257 / NCTC 11834 / 2561).